The sequence spans 164 residues: Nitrogen regulatory protein homolog (164 aa).

One can recognise a PTS EIIA type-2 domain in the interval 5 to 152; the sequence is ELLSPENIRQ…DEIWQVFEIT (148 aa).

Functionally, not known; lacks the phosphorylation site found in other PtsN proteins. This Haemophilus influenzae (strain ATCC 51907 / DSM 11121 / KW20 / Rd) protein is Nitrogen regulatory protein homolog (ptsN).